Reading from the N-terminus, the 582-residue chain is Phosphoribosylaminoimidazole carboxylase (582 aa).

The 192-residue stretch at 114–305 folds into the ATP-grasp domain; the sequence is KKYLAEKGVA…QFENHLRAIL (192 aa). 143 to 200 lines the ATP pocket; that stretch reads AGRLGLPLMLKAKTLAYDGRGNSPLKSTSSEDIQASLKFLGDRPLYAEGWAPFVKEVA.

In the C-terminal section; belongs to the AIR carboxylase family. Class I subfamily.

It carries out the reaction 5-amino-1-(5-phospho-D-ribosyl)imidazole-4-carboxylate + H(+) = 5-amino-1-(5-phospho-beta-D-ribosyl)imidazole + CO2. Its pathway is purine metabolism; IMP biosynthesis via de novo pathway; 5-amino-1-(5-phospho-D-ribosyl)imidazole-4-carboxylate from 5-amino-1-(5-phospho-D-ribosyl)imidazole (carboxylase route): step 1/1. This is Phosphoribosylaminoimidazole carboxylase (ADE2) from Cryptococcus neoformans var. grubii serotype A (strain H99 / ATCC 208821 / CBS 10515 / FGSC 9487) (Filobasidiella neoformans var. grubii).